A 523-amino-acid chain; its full sequence is Flavonoid 3',5'-hydroxylase (523 aa).

Cys460 is a heme binding site.

Belongs to the cytochrome P450 family. The cofactor is heme.

The catalysed reaction is a 3',5'-unsubstituted flavanone + 2 reduced [NADPH--hemoprotein reductase] + 2 O2 = a 3',5'-dihydroxyflavanone + 2 oxidized [NADPH--hemoprotein reductase] + 2 H2O + 2 H(+). Its pathway is pigment biosynthesis; anthocyanin biosynthesis. Its function is as follows. Catalyzes the 3'5'-hydroxylation of naringenin and eriodictyol to form 5,7,3,'4',5'-pentahydroxyflavanone and 3',5'-hydroxylation of dihydrokaempferol and dihydroquercetin to form dihydromyricetin. This is Flavonoid 3',5'-hydroxylase (CYP75A6) from Campanula medium (Canterbury bells).